An 87-amino-acid chain; its full sequence is DNA-directed RNA polymerase subunit omega (87 aa).

Belongs to the RNA polymerase subunit omega family. In terms of assembly, the RNAP catalytic core consists of 2 alpha, 1 beta, 1 beta' and 1 omega subunit. When a sigma factor is associated with the core the holoenzyme is formed, which can initiate transcription.

It catalyses the reaction RNA(n) + a ribonucleoside 5'-triphosphate = RNA(n+1) + diphosphate. In terms of biological role, promotes RNA polymerase assembly. Latches the N- and C-terminal regions of the beta' subunit thereby facilitating its interaction with the beta and alpha subunits. This Pseudomonas fluorescens (strain SBW25) protein is DNA-directed RNA polymerase subunit omega.